The sequence spans 479 residues: Galactosylgalactosylxylosylprotein 3-beta-glucuronosyltransferase P (479 aa).

Over 1 to 34 the chain is Cytoplasmic; the sequence is MKGGNYTSLGTCSGINVSGNVAGTRKMSLGKSIK. The chain crosses the membrane as a helical; Signal-anchor for type II membrane protein span at residues 35–50; that stretch reads MYLTIFILTTCIYMAL. Over 51 to 479 the chain is Lumenal; that stretch reads YQYHISREPF…EHIDRLLVRP (429 aa). Residues N90, N97, N98, and N271 are each glycosylated (N-linked (GlcNAc...) asparagine). A compositionally biased stretch (low complexity) spans 94–120; sequence NTNNNSTTTSTTTTTAPTTPTTTTTTT. The segment at 94–122 is disordered; it reads NTNNNSTTTSTTTTTAPTTPTTTTTTTVG. D335 lines the Mn(2+) pocket. The active-site Proton acceptor is the E418. N460 is a glycosylation site (N-linked (GlcNAc...) asparagine).

Belongs to the glycosyltransferase 43 family. Mn(2+) is required as a cofactor.

It localises to the golgi apparatus membrane. The catalysed reaction is 3-O-(beta-D-galactosyl-(1-&gt;3)-beta-D-galactosyl-(1-&gt;4)-beta-D-xylosyl)-L-seryl-[protein] + UDP-alpha-D-glucuronate = 3-O-(beta-D-GlcA-(1-&gt;3)-beta-D-Gal-(1-&gt;3)-beta-D-Gal-(1-&gt;4)-beta-D-Xyl)-L-seryl-[protein] + UDP + H(+). It participates in protein modification; protein glycosylation. In terms of biological role, involved in the biosynthesis of L2/HNK-1 carbohydrate epitope on both glycolipids and glycoproteins. Enzyme has a broad specificity. The protein is Galactosylgalactosylxylosylprotein 3-beta-glucuronosyltransferase P (GlcAT-P) of Drosophila melanogaster (Fruit fly).